Consider the following 358-residue polypeptide: Protein UL24 (358 aa).

It belongs to the herpesviridae US22 family.

Its subcellular location is the virion tegument. The protein is Protein UL24 (UL24) of Homo sapiens (Human).